The sequence spans 475 residues: Cytosolic non-specific dipeptidase (475 aa).

Ser-58 is subject to Phosphoserine. Mn(2+) is bound at residue His-99. Asp-101 is an active-site residue. A Mn(2+)-binding site is contributed by Asp-132. Catalysis depends on Glu-166, which acts as the Proton acceptor. Substrate-binding positions include 166–167, Asp-195, and His-228; that span reads EE. Mn(2+)-binding residues include Glu-167 and Asp-195. Position 299 is a phosphoserine (Ser-299). Residues Thr-330, Arg-343, Ser-417, and His-445 each contribute to the substrate site. His-445 provides a ligand contact to Mn(2+).

Belongs to the peptidase M20A family. In terms of assembly, homodimer. Mn(2+) serves as cofactor. As to expression, highly expressed in the parafascicular nucleus of the thalamus, tuberomammillary nucleus of the hypothalamus and the mitral cell layer of the olfactory bulb.

Its subcellular location is the cytoplasm. The catalysed reaction is Hydrolysis of dipeptides, preferentially hydrophobic dipeptides including prolyl amino acids.. It carries out the reaction L-threonyl-L-threonine + H2O = 2 L-threonine. It catalyses the reaction L-threonyl-L-serine + H2O = L-threonine + L-serine. The enzyme catalyses L-seryl-L-threonine + H2O = L-threonine + L-serine. The catalysed reaction is L-cysteinylglycine + H2O = L-cysteine + glycine. It carries out the reaction L-alanyl-L-cysteine + H2O = L-cysteine + L-alanine. It catalyses the reaction (S)-lactate + L-phenylalanine = N-[(S)-lactoyl]-L-phenylalanine + H2O. With respect to regulation, inhibited by bestatin. Its function is as follows. Catalyzes the peptide bond hydrolysis in dipeptides, displaying a non-redundant activity toward threonyl dipeptides. Mediates threonyl dipeptide catabolism in a tissue-specific way. Has high dipeptidase activity toward cysteinylglycine, an intermediate metabolite in glutathione metabolism. Metabolizes N-lactoyl-amino acids, both through hydrolysis to form lactic acid and amino acids, as well as through their formation by reverse proteolysis. Plays a role in the regulation of cell cycle arrest and apoptosis. This is Cytosolic non-specific dipeptidase (Cndp2) from Mus musculus (Mouse).